The primary structure comprises 59 residues: Large ribosomal subunit protein uL30 (59 aa).

The protein belongs to the universal ribosomal protein uL30 family. Part of the 50S ribosomal subunit.

The sequence is that of Large ribosomal subunit protein uL30 from Rhodococcus jostii (strain RHA1).